A 137-amino-acid chain; its full sequence is MIVRNLGDIRKTDRNVRSDGWASARMLLKDDGMGFSFHVTTLFAGSELRMHYQNHLEAVLVLKGTGTIEDLATGEVHALRPGVMYALDDHDRHIVRPETDILTACVFNPPVTGREVHDESGAYPADPELAREPVAAD.

The disordered stretch occupies residues 115–137 (EVHDESGAYPADPELAREPVAAD).

This sequence belongs to the ectoine synthase family.

It catalyses the reaction (2S)-4-acetamido-2-aminobutanoate = L-ectoine + H2O. The protein operates within amine and polyamine biosynthesis; ectoine biosynthesis; L-ectoine from L-aspartate 4-semialdehyde: step 3/3. Functionally, catalyzes the circularization of gamma-N-acetyl-alpha,gamma-diaminobutyric acid (ADABA) to ectoine (1,4,5,6-tetrahydro-2-methyl-4-pyrimidine carboxylic acid), which is an excellent osmoprotectant. The protein is L-ectoine synthase of Sphingopyxis alaskensis (strain DSM 13593 / LMG 18877 / RB2256) (Sphingomonas alaskensis).